Reading from the N-terminus, the 223-residue chain is RNA-free ribonuclease P (223 aa).

This sequence belongs to the HARP family.

The catalysed reaction is Endonucleolytic cleavage of RNA, removing 5'-extranucleotides from tRNA precursor.. Functionally, RNA-free RNase P that catalyzes the removal of the 5'-leader sequence from pre-tRNA to produce the mature 5'-terminus. The protein is RNA-free ribonuclease P of Methanococcus maripaludis (strain DSM 14266 / JCM 13030 / NBRC 101832 / S2 / LL).